Reading from the N-terminus, the 204-residue chain is uncharacterized protein (204 aa).

The first 17 residues, 1-17, serve as a signal peptide directing secretion; that stretch reads MKRLVTGLLALSLFLAA. Positions 17 to 102 are disordered; the sequence is ACGQDSDQQK…NQSSNNQKSS (86 aa). A lipid anchor (N-palmitoyl cysteine) is attached at C18. C18 carries S-diacylglycerol cysteine lipidation. Basic and acidic residues predominate over residues 23–70; that stretch reads DQQKDSNKEKDDKAKTEQQDKKTNDSSKDKKDNKDDSKDVNKDNKDNS. The segment covering 71–102 has biased composition (low complexity); the sequence is ANDNQQQSNSNATNNDQNQTNNNQSSNNQKSS.

The protein localises to the cell membrane. This is an uncharacterized protein from Staphylococcus aureus (strain Mu50 / ATCC 700699).